The chain runs to 234 residues: LexA repressor (234 aa).

Positions F26–T46 form a DNA-binding region, H-T-H motif. The interval A73–N107 is disordered. Catalysis depends on for autocatalytic cleavage activity residues S155 and K192.

It belongs to the peptidase S24 family. Homodimer.

It carries out the reaction Hydrolysis of Ala-|-Gly bond in repressor LexA.. Represses a number of genes involved in the response to DNA damage (SOS response), including recA and lexA. In the presence of single-stranded DNA, RecA interacts with LexA causing an autocatalytic cleavage which disrupts the DNA-binding part of LexA, leading to derepression of the SOS regulon and eventually DNA repair. This chain is LexA repressor, found in Caulobacter vibrioides (strain ATCC 19089 / CIP 103742 / CB 15) (Caulobacter crescentus).